Reading from the N-terminus, the 365-residue chain is Phosphate acyltransferase (365 aa).

This sequence belongs to the PlsX family. In terms of assembly, homodimer. Probably interacts with PlsY.

It is found in the cytoplasm. It catalyses the reaction a fatty acyl-[ACP] + phosphate = an acyl phosphate + holo-[ACP]. It functions in the pathway lipid metabolism; phospholipid metabolism. Catalyzes the reversible formation of acyl-phosphate (acyl-PO(4)) from acyl-[acyl-carrier-protein] (acyl-ACP). This enzyme utilizes acyl-ACP as fatty acyl donor, but not acyl-CoA. The protein is Phosphate acyltransferase of Jannaschia sp. (strain CCS1).